A 139-amino-acid chain; its full sequence is Transcription antitermination protein NusB (139 aa).

Belongs to the NusB family.

Involved in transcription antitermination. Required for transcription of ribosomal RNA (rRNA) genes. Binds specifically to the boxA antiterminator sequence of the ribosomal RNA (rrn) operons. The protein is Transcription antitermination protein NusB of Lactiplantibacillus plantarum (strain ATCC BAA-793 / NCIMB 8826 / WCFS1) (Lactobacillus plantarum).